The following is a 79-amino-acid chain: Cell division protein ZapB (79 aa).

The stretch at 4–78 forms a coiled coil; it reads EVFEKLESKV…LRALLGKMEE (75 aa).

Belongs to the ZapB family. In terms of assembly, homodimer. The ends of the coiled-coil dimer bind to each other, forming polymers. Interacts with FtsZ.

It localises to the cytoplasm. In terms of biological role, non-essential, abundant cell division factor that is required for proper Z-ring formation. It is recruited early to the divisome by direct interaction with FtsZ, stimulating Z-ring assembly and thereby promoting cell division earlier in the cell cycle. Its recruitment to the Z-ring requires functional FtsA or ZipA. The chain is Cell division protein ZapB from Serratia proteamaculans (strain 568).